Here is an 846-residue protein sequence, read N- to C-terminus: Translation initiation factor IF-2 (846 aa).

The 168-residue stretch at 345-512 folds into the tr-type G domain; that stretch reads SRAPVVTIMG…AVLLQSEVLE (168 aa). Positions 354-361 are G1; sequence GHVDHGKT. 354 to 361 contacts GTP; sequence GHVDHGKT. Residues 379–383 are G2; sequence GITQH. Residues 400-403 form a G3 region; the sequence is DTPG. GTP contacts are provided by residues 400–404 and 454–457; these read DTPGH and NKID. A G4 region spans residues 454–457; sequence NKID. Residues 490 to 492 are G5; it reads SAK.

The protein belongs to the TRAFAC class translation factor GTPase superfamily. Classic translation factor GTPase family. IF-2 subfamily.

It localises to the cytoplasm. Functionally, one of the essential components for the initiation of protein synthesis. Protects formylmethionyl-tRNA from spontaneous hydrolysis and promotes its binding to the 30S ribosomal subunits. Also involved in the hydrolysis of GTP during the formation of the 70S ribosomal complex. The protein is Translation initiation factor IF-2 of Francisella tularensis subsp. holarctica (strain FTNF002-00 / FTA).